A 236-amino-acid chain; its full sequence is uncharacterized protein (236 aa).

It localises to the virion. This is an uncharacterized protein from Acanthamoeba polyphaga (Amoeba).